Reading from the N-terminus, the 157-residue chain is Dihydrofolate reductase type 6 (157 aa).

Residues lysine 2–lysine 156 form the DHFR domain.

This sequence belongs to the dihydrofolate reductase family. In terms of assembly, homodimer.

The enzyme catalyses (6S)-5,6,7,8-tetrahydrofolate + NADP(+) = 7,8-dihydrofolate + NADPH + H(+). The protein operates within cofactor biosynthesis; tetrahydrofolate biosynthesis; 5,6,7,8-tetrahydrofolate from 7,8-dihydrofolate: step 1/1. Functionally, key enzyme in folate metabolism. Catalyzes an essential reaction for de novo glycine and purine synthesis, and for DNA precursor synthesis. The sequence is that of Dihydrofolate reductase type 6 (dhfrVI) from Proteus mirabilis.